The primary structure comprises 597 residues: Elongation factor 4 (597 aa).

One can recognise a tr-type G domain in the interval 2-184 (DHIRNFSIIA…ALIAKVPPPK (183 aa)). Residues 14–19 (DHGKST) and 131–134 (NKID) contribute to the GTP site.

The protein belongs to the TRAFAC class translation factor GTPase superfamily. Classic translation factor GTPase family. LepA subfamily.

The protein localises to the cell inner membrane. The enzyme catalyses GTP + H2O = GDP + phosphate + H(+). Required for accurate and efficient protein synthesis under certain stress conditions. May act as a fidelity factor of the translation reaction, by catalyzing a one-codon backward translocation of tRNAs on improperly translocated ribosomes. Back-translocation proceeds from a post-translocation (POST) complex to a pre-translocation (PRE) complex, thus giving elongation factor G a second chance to translocate the tRNAs correctly. Binds to ribosomes in a GTP-dependent manner. The polypeptide is Elongation factor 4 (Burkholderia multivorans (strain ATCC 17616 / 249)).